A 271-amino-acid chain; its full sequence is Tryptophan synthase alpha chain (271 aa).

Residues Glu-56 and Asp-67 each act as proton acceptor in the active site.

It belongs to the TrpA family. In terms of assembly, tetramer of two alpha and two beta chains.

It catalyses the reaction (1S,2R)-1-C-(indol-3-yl)glycerol 3-phosphate + L-serine = D-glyceraldehyde 3-phosphate + L-tryptophan + H2O. It functions in the pathway amino-acid biosynthesis; L-tryptophan biosynthesis; L-tryptophan from chorismate: step 5/5. Its function is as follows. The alpha subunit is responsible for the aldol cleavage of indoleglycerol phosphate to indole and glyceraldehyde 3-phosphate. The chain is Tryptophan synthase alpha chain from Mycobacterium intracellulare.